A 2643-amino-acid chain; its full sequence is Ankyrin repeat domain-containing protein 11 (2643 aa).

Disordered regions lie at residues 1–90 and 128–170; these read MPKG…KEPV and SANS…RGET. 2 stretches are compositionally biased toward basic and acidic residues: residues 21–54 and 69–90; these read MVEK…VRER and EQKD…KEPV. The span at 128-155 shows a compositional bias: polar residues; that stretch reads SANSPVDTTPKHPSQSTVCQKGTPNSAS. Basic and acidic residues predominate over residues 156-170; that stretch reads KTKDKVNKRNERGET. ANK repeat units follow at residues 167-196, 200-229, 233-262, and 266-292; these read RGET…DVNV, AGWT…EVNT, DDDT…NPQQ, and KGET…YTSS. Serine 276 bears the Phosphoserine mark. The segment at 289–365 is disordered; the sequence is YTSSEESSTE…DRVPPVDDKH (77 aa). The span at 295-305 shows a compositional bias: acidic residues; the sequence is SSTESSEEEDA. The segment covering 309–320 has biased composition (polar residues); sequence APSSSVDGNNTD. Basic and acidic residues-rich tracts occupy residues 322 to 335 and 356 to 365; these read EFEK…KNPE and DRVPPVDDKH. The residue at position 408 (serine 408) is a Phosphoserine. Threonine 410 bears the Phosphothreonine mark. Phosphoserine is present on serine 411. Disordered stretches follow at residues 423–504, 517–651, and 727–805; these read GEKL…CLKG, SLSA…GQCS, and DANK…DKEK. Basic and acidic residues predominate over residues 438–451; sequence KARESSSSRQQKEK. Positions 452–462 are enriched in basic residues; that stretch reads NKLKKKRKKET. A compositionally biased stretch (basic and acidic residues) spans 463 to 475; the sequence is KGKEVRFGKRSDK. Positions 484–494 are enriched in acidic residues; sequence ESSESEEDDGD. The segment covering 517–528 has biased composition (low complexity); it reads SLSASSTSSHGS. Residues 537-550 show a composition bias toward basic and acidic residues; that stretch reads GHTDQHTKHWRTDN. Residues 557-574 show a composition bias toward polar residues; it reads PAWSEVSSLSDSSRTGLT. The segment covering 575–588 has biased composition (low complexity); sequence SESDCSSEGSSVES. Basic residues-rich tracts occupy residues 591–602 and 633–646; these read PTRRKQEHRKRG and VKKH…KHKE. Serine 838 is subject to Phosphoserine. 2 stretches are compositionally biased toward basic and acidic residues: residues 918–931 and 938–962; these read KNSE…EKHK and SEKD…IRSE. Disordered regions lie at residues 918-962, 977-1037, and 1051-1074; these read KNSE…IRSE, SFKD…STLD, and EKKD…FDQL. Serine 1070 carries the phosphoserine modification. The residue at position 1111 (threonine 1111) is a Phosphothreonine. Serine 1114 carries the post-translational modification Phosphoserine. Disordered regions lie at residues 1114 to 1388 and 1420 to 1711; these read SEDE…KDAS and LFSS…TPSC. 8 stretches are compositionally biased toward basic and acidic residues: residues 1133-1297, 1326-1343, 1355-1388, 1420-1444, 1464-1535, 1546-1564, 1577-1587, and 1595-1640; these read DTQR…DKIS, AEDK…LREK, KSHE…KDAS, LFSS…KELK, RERW…KGDS, VPSR…KLLG, LSQKDLEIEER, and MKQM…KVKE. Position 1676 is a phosphoserine (serine 1676). The span at 1678 to 1695 shows a compositional bias: polar residues; that stretch reads RTEQSRPTGVPTPTSVVS. A phosphoserine mark is found at serine 1777 and serine 1832. Phosphotyrosine occurs at positions 1835 and 1836. Residues serine 1837 and serine 1844 each carry the phosphoserine modification. Disordered stretches follow at residues 1863–1900, 1981–2027, and 2111–2386; these read PPDS…GLPL, SPKH…EVKD, and HEAF…STQQ. A phosphoserine mark is found at serine 1981 and serine 2139. Composition is skewed to pro residues over residues 2150 to 2160 and 2175 to 2184; these read PVPPAESPPGP and EEPPAPPPQE. The segment covering 2273–2284 has biased composition (low complexity); it reads SAEASCVVAAAE. Positions 2297-2315 are enriched in basic and acidic residues; the sequence is PEPKPTSEVPKAPKVEEVP. The tract at residues 2349-2643 is important for protein degradation; the sequence is AKGRASEEED…VNDDFVLLPA (295 aa). Positions 2371 to 2386 are enriched in low complexity; sequence RSSQQLQQQLNTSTQQ.

In terms of assembly, interacts with the PAS region of the p160 coactivators. Subject to proteasomal degradation which is probably essential to regulate its activity.

The protein localises to the nucleus. Its function is as follows. Chromatin regulator which modulates histone acetylation and gene expression in neural precursor cells. May recruit histone deacetylases (HDACs) to the p160 coactivators/nuclear receptor complex to inhibit ligand-dependent transactivation. Has a role in proliferation and development of cortical neural precursors. May also regulate bone homeostasis. The polypeptide is Ankyrin repeat domain-containing protein 11 (Mus musculus (Mouse)).